The primary structure comprises 134 residues: Large ribosomal subunit protein eL32 (134 aa).

The protein belongs to the eukaryotic ribosomal protein eL32 family.

This Apis mellifera (Honeybee) protein is Large ribosomal subunit protein eL32 (RpL32).